We begin with the raw amino-acid sequence, 221 residues long: Octanoyltransferase (221 aa).

The 180-residue stretch at 29–208 folds into the BPL/LPL catalytic domain; sequence DEIPDTCLLL…RLTEFLLPAR (180 aa). Substrate is bound by residues 67-74, 138-140, and 151-153; these read RGGRITWH, AIG, and GFA. C169 serves as the catalytic Acyl-thioester intermediate.

Belongs to the LipB family.

It is found in the cytoplasm. It carries out the reaction octanoyl-[ACP] + L-lysyl-[protein] = N(6)-octanoyl-L-lysyl-[protein] + holo-[ACP] + H(+). Its pathway is protein modification; protein lipoylation via endogenous pathway; protein N(6)-(lipoyl)lysine from octanoyl-[acyl-carrier-protein]: step 1/2. Its function is as follows. Catalyzes the transfer of endogenously produced octanoic acid from octanoyl-acyl-carrier-protein onto the lipoyl domains of lipoate-dependent enzymes. Lipoyl-ACP can also act as a substrate although octanoyl-ACP is likely to be the physiological substrate. The chain is Octanoyltransferase from Acidothermus cellulolyticus (strain ATCC 43068 / DSM 8971 / 11B).